The sequence spans 114 residues: Large ribosomal subunit protein bL19 (114 aa).

This sequence belongs to the bacterial ribosomal protein bL19 family.

In terms of biological role, this protein is located at the 30S-50S ribosomal subunit interface and may play a role in the structure and function of the aminoacyl-tRNA binding site. In Bacillus cytotoxicus (strain DSM 22905 / CIP 110041 / 391-98 / NVH 391-98), this protein is Large ribosomal subunit protein bL19.